The following is a 441-amino-acid chain: Glutamate--tRNA ligase 1 (441 aa).

Residues 7 to 17 carry the 'HIGH' region motif; that stretch reads PSPTGYMHIGN. The short motif at 236-240 is the 'KMSKS' region element; the sequence is KMSKR. Residue K239 coordinates ATP.

Belongs to the class-I aminoacyl-tRNA synthetase family. Glutamate--tRNA ligase type 1 subfamily. Monomer.

The protein localises to the cytoplasm. The catalysed reaction is tRNA(Glu) + L-glutamate + ATP = L-glutamyl-tRNA(Glu) + AMP + diphosphate. Functionally, catalyzes the attachment of glutamate to tRNA(Glu) in a two-step reaction: glutamate is first activated by ATP to form Glu-AMP and then transferred to the acceptor end of tRNA(Glu). This chain is Glutamate--tRNA ligase 1, found in Anaplasma marginale (strain St. Maries).